We begin with the raw amino-acid sequence, 423 residues long: Growth hormone-releasing hormone receptor (423 aa).

Residues 1–22 (MDSGVWAACIFCLLSSLPVALG) form the signal peptide. The Extracellular segment spans residues 23 to 130 (HVHPECDFIT…DEKSYFSTVR (108 aa)). Cystine bridges form between C41-C64, C55-C96, and C78-C112. N50 is a glycosylation site (N-linked (GlcNAc...) asparagine). Residues 131–151 (IVYTTGHSVSAVALFVAIAIL) traverse the membrane as a helical segment. The Cytoplasmic portion of the chain corresponds to 152 to 167 (VALRRLHCPRNYIHSQ). A helical membrane pass occupies residues 168 to 188 (LFATFILKAGAVFLKDAALFH). Topologically, residues 189 to 210 (SENTDHCSFSTVLCKVSVATSH) are extracellular. Residues 211-231 (FATMTNFSWLLAEAVYLTCLL) traverse the membrane as a helical segment. Topologically, residues 232–240 (ASTSPSTRR) are cytoplasmic. A helical membrane pass occupies residues 241-261 (AFWWLVLAGWGLPLLFTGTWV). The Extracellular portion of the chain corresponds to 262–283 (GCKLAFEDVACWDLDDSSPYWW). A helical membrane pass occupies residues 284-304 (IIKGPIVLSVGVNFGLFLNII). The Cytoplasmic portion of the chain corresponds to 305-331 (RILLRKLEPAQGSLHTQPQYWRLSKST). A helical membrane pass occupies residues 332–352 (LLLIPLFGIHYVIFNFLPDSA). Over 353–357 (GLGIR) the chain is Extracellular. A helical transmembrane segment spans residues 358–378 (LPLELGLGSFQGFIVAILYCF). Topologically, residues 379–423 (LNQEVRTEISRRWHGHDPELLPAWRTHAKWAKPSRSRAKVLTTVC) are cytoplasmic.

The protein belongs to the G-protein coupled receptor 2 family. As to expression, pituitary gland. Also detected in the lymphocytes and thymocytes.

The protein localises to the cell membrane. Its function is as follows. Receptor for GRF, coupled to G proteins which activate adenylyl cyclase. Stimulates somatotroph cell growth, growth hormone gene transcription and growth hormone secretion. The chain is Growth hormone-releasing hormone receptor (GHRHR) from Sus scrofa (Pig).